Consider the following 1070-residue polypeptide: Error-prone DNA polymerase (1070 aa).

It belongs to the DNA polymerase type-C family. DnaE2 subfamily.

The protein resides in the cytoplasm. It catalyses the reaction DNA(n) + a 2'-deoxyribonucleoside 5'-triphosphate = DNA(n+1) + diphosphate. In terms of biological role, DNA polymerase involved in damage-induced mutagenesis and translesion synthesis (TLS). It is not the major replicative DNA polymerase. This Aromatoleum aromaticum (strain DSM 19018 / LMG 30748 / EbN1) (Azoarcus sp. (strain EbN1)) protein is Error-prone DNA polymerase.